We begin with the raw amino-acid sequence, 78 residues long: UPF0335 protein RrIowa_0193 (78 aa).

Belongs to the UPF0335 family.

This is UPF0335 protein RrIowa_0193 from Rickettsia rickettsii (strain Iowa).